The primary structure comprises 1056 residues: MDRRIGLTSPSPKSTEKSGRDLRSGGDANGGANTNSNSIPRGDKEKGVNVQVILRCRPMSDEETKSNTPVVISCNERRREVAATQIIANKQIDRTFAFDKVFGPASKQKDLFEQSISPIVNEVLEGYNCTIFAYGQTGTGKTYTMEGGGTRKTKNGELPTDAGVIPRAVRQIFDILEAQCAEYSMKVTFLELYNEEITDLLAPEEPKFPIVPEDKTKKPIALMEDGKGGVFVRGLEEEVVYSAGEIYKILDKGSAKRRTAETLLNKQSSRSHSIFSITIHIKELTHEGEEMIKIGKLNLVDLAGSENISRSGARDGRAREAGEINKSLLTLGRVINALVEHSGHVPYRDSKLTRLLRDSLGGKTKTCIIATISPSVYCLEETLSTLDYAHRAKNIKNKPEVNQRMMKSAVIKDLYSEIDRLKQEVFAAREKNGIYIPRERYLQEEAEKKAMTEKIERLGADLEARDKQLVELKELYDAEQLLSAELSEKLGKTQKDLEDTKNVLHDLEEKYNEAESTIKEKEYVIFNLLKSEKSLVDCAYNLRAELENAAADVSGLFSKIERKDKIEDGNRSLVQRFRSQLTNQLDTLHKTVSTSVMQQENHLKEMEDDMQSFVSSKDEAAQGLRESIQKLKLLHGSGITALDSLAGEIDMNSQSTFERLNSQVQSHTSSLEQCFGGIASEADNLLNELQCSLSKQEERLTQFAKKQREGHLRAVEASRSISKITAGFFSSLDVHASKLTSILEETQSVQDQQLLDLEKKFEECAANEEKQLLEKVAEMLASSHARKKKLVQTAVGNLRESAVNRTSHLQNEISTAQDFTSSVREKWGFYMEETEKNYIEDTTAVDSGRSCLAEVLVECKAKTTMGAQQWKNAEDSLFSLGKGNVESADSIVRTGTEANQSLRSKLSSAVSTTLEEIDIANKALLSSIDSSLKLDHDACANIGSIIKPCHEEISELKGGHYHRVVEITENAGKCLEEEYLVDEPSCSTPRRRQIDLPSMESIEQLRTPDYDELLKSFRESRASLKQANGDMKHFLEVQEATPPSITDPRAPLIARN.

The segment at methionine 1 to lysine 44 is disordered. A compositionally biased stretch (basic and acidic residues) spans serine 14–serine 24. Residues asparagine 49–isoleucine 395 form the Kinesin motor domain. Glycine 135–threonine 142 provides a ligand contact to ATP. Residues glutamine 443–isoleucine 525 adopt a coiled-coil conformation.

It belongs to the TRAFAC class myosin-kinesin ATPase superfamily. Kinesin family. KIN-5/BimC subfamily.

Its subcellular location is the cytoplasm. The protein localises to the cytoskeleton. It localises to the spindle. In terms of biological role, responsible for microtubule translocation. May be important for the organization of phragmoplast-specific arrays of microtubules. Plays an essential role in stabilizing the mitotic spindle. Required during mitotic cytokinesis. This is Kinesin-like protein KIN-5A from Oryza sativa subsp. japonica (Rice).